Reading from the N-terminus, the 226-residue chain is Transmembrane protein 204 (226 aa).

Residues methionine 1–arginine 5 lie on the Cytoplasmic side of the membrane. A helical transmembrane segment spans residues leucine 6–phenylalanine 26. The Extracellular portion of the chain corresponds to threonine 27 to asparagine 103. The helical transmembrane segment at leucine 104–leucine 124 threads the bilayer. Residues proline 125–glutamate 136 are Cytoplasmic-facing. Residues alanine 137–tyrosine 157 form a helical membrane-spanning segment. Topologically, residues arginine 158–tyrosine 170 are extracellular. N-linked (GlcNAc...) asparagine glycosylation is present at asparagine 164. The chain crosses the membrane as a helical span at residues leucine 171–leucine 191. Over histidine 192 to cysteine 226 the chain is Cytoplasmic.

Highly expressed in lung, heart, kidney and placenta. Lower expression in thymus, spleen, liver, testis and ovary. Expressed in endothelial and restricted epithelial cell populations.

Its subcellular location is the cell junction. The protein localises to the adherens junction. It is found in the cell membrane. Its function is as follows. Can influence paracellular permeability. Appears to be involved in cell-cell interactions through adherens. The protein is Transmembrane protein 204 (TMEM204) of Homo sapiens (Human).